Here is a 435-residue protein sequence, read N- to C-terminus: Serine--tRNA ligase (435 aa).

241 to 243 (TAE) is an L-serine binding site. Residue 272–274 (RAE) participates in ATP binding. Position 295 (glutamate 295) interacts with L-serine. 359–362 (EISS) serves as a coordination point for ATP. Residue serine 395 coordinates L-serine.

This sequence belongs to the class-II aminoacyl-tRNA synthetase family. Type-1 seryl-tRNA synthetase subfamily. As to quaternary structure, homodimer. The tRNA molecule binds across the dimer.

It localises to the cytoplasm. It catalyses the reaction tRNA(Ser) + L-serine + ATP = L-seryl-tRNA(Ser) + AMP + diphosphate + H(+). The catalysed reaction is tRNA(Sec) + L-serine + ATP = L-seryl-tRNA(Sec) + AMP + diphosphate + H(+). It functions in the pathway aminoacyl-tRNA biosynthesis; selenocysteinyl-tRNA(Sec) biosynthesis; L-seryl-tRNA(Sec) from L-serine and tRNA(Sec): step 1/1. Catalyzes the attachment of serine to tRNA(Ser). Is also able to aminoacylate tRNA(Sec) with serine, to form the misacylated tRNA L-seryl-tRNA(Sec), which will be further converted into selenocysteinyl-tRNA(Sec). The protein is Serine--tRNA ligase of Haemophilus ducreyi (strain 35000HP / ATCC 700724).